The sequence spans 362 residues: Phosphoglycolate phosphatase 1B, chloroplastic (362 aa).

The N-terminal 54 residues, Met1–Met54, are a transit peptide targeting the chloroplast. N-acetylthreonine is present on Thr55. Residue Glu80 is the Nucleophile of the active site. Ser356 is modified (phosphoserine).

The protein belongs to the HAD-like hydrolase superfamily. CbbY/CbbZ/Gph/YieH family.

The protein resides in the plastid. It is found in the chloroplast. The catalysed reaction is 2-phosphoglycolate + H2O = glycolate + phosphate. Its function is as follows. Photorespiratory enzyme that dephosphorylates the 2-phosphoglycolate produced by the RuBisCO oxygenation reaction. This is Phosphoglycolate phosphatase 1B, chloroplastic (PGLP1B) from Arabidopsis thaliana (Mouse-ear cress).